Consider the following 511-residue polypeptide: MASDSSFPGASSNVAEYSVSEISGALKRTVEDTFGHVRVRGEISGYRGPHSSGHAYFALKDDRARLEAVIWRGSMSRLRFRPEEGMEVIATGKLTTYPGSSKYQIVIEQMEPAGAGALMALLEERKQRLAAEGLFDPTLKQLLPFMPRVIGVVTSPTGAVIRDIIHRISDRYPLRVIVWPVRVQGDTCGPEVATAVNGFNTLPDDGPIPRPDVLIVARGGGSLEDLWGFNDEIVVRAVAASHIPVISAVGHETDWTLIDLAADMRAPTPTGAAEMAVPVKADLQASLASQSARLSSAMSRFFDQKRQAHRAAARAMPSADQLLALPRRRFDEAASRLTRALFVNTQKKRVHFDGHARQLSPRLLQRRLVELERGVTMLGQRLPRALEAFLRERRTAFTHRANRLSPEPILRRTRLTGSTLEQLDRRRDQAVRLLIERVKRRSQELDRLMRTLSYESVLERGFAVVFDAQGKPVKQAAAVSPGDALSVRFRDGDVGVVARAGLTIPDPTKGQ.

It belongs to the XseA family. In terms of assembly, heterooligomer composed of large and small subunits.

The protein resides in the cytoplasm. The catalysed reaction is Exonucleolytic cleavage in either 5'- to 3'- or 3'- to 5'-direction to yield nucleoside 5'-phosphates.. Bidirectionally degrades single-stranded DNA into large acid-insoluble oligonucleotides, which are then degraded further into small acid-soluble oligonucleotides. The protein is Exodeoxyribonuclease 7 large subunit of Brucella abortus (strain S19).